Consider the following 291-residue polypeptide: 4-hydroxy-tetrahydrodipicolinate synthase (291 aa).

A pyruvate-binding site is contributed by T45. The active-site Proton donor/acceptor is the Y131. The Schiff-base intermediate with substrate role is filled by K159. I202 is a pyruvate binding site.

It belongs to the DapA family. As to quaternary structure, homotetramer; dimer of dimers.

The protein localises to the cytoplasm. It catalyses the reaction L-aspartate 4-semialdehyde + pyruvate = (2S,4S)-4-hydroxy-2,3,4,5-tetrahydrodipicolinate + H2O + H(+). It participates in amino-acid biosynthesis; L-lysine biosynthesis via DAP pathway; (S)-tetrahydrodipicolinate from L-aspartate: step 3/4. Catalyzes the condensation of (S)-aspartate-beta-semialdehyde [(S)-ASA] and pyruvate to 4-hydroxy-tetrahydrodipicolinate (HTPA). This chain is 4-hydroxy-tetrahydrodipicolinate synthase, found in Methanosarcina mazei (strain ATCC BAA-159 / DSM 3647 / Goe1 / Go1 / JCM 11833 / OCM 88) (Methanosarcina frisia).